Consider the following 296-residue polypeptide: MDKIQETFLYMLKVERNFSEYTLKSYHDDLVQFNNFLEREHLQLETFEYKDARNYLAFLYSNQLKRTTVSRKISTLRTFYEFWMTQDNSIINPFVQLVHPKKEKYLPQFFYEEEMEALFQTVEHDNKKGIRDKVIIELLYATGIRVSELINIKLKDIDMNLPGVKVLGKGNKERFIPFGEFCRQSIERYLEEFQPKQLANHDYLIVNMKGDPITERGVRYVLNDVVKRTAGVNDIHPHKLRHTFATHLLNQGADLRTVQSLLGHVNLSTTGRYTHVSNQQLRKVYLNAHPRAKKGE.

The Core-binding (CB) domain maps to 1–84 (MDKIQETFLY…TLRTFYEFWM (84 aa)). Residues 105–286 (YLPQFFYEEE…SNQQLRKVYL (182 aa)) enclose the Tyr recombinase domain. Catalysis depends on residues R145, K169, H238, R241, and H264. Y273 (O-(3'-phospho-DNA)-tyrosine intermediate) is an active-site residue.

Belongs to the 'phage' integrase family. XerC subfamily. Forms a cyclic heterotetrameric complex composed of two molecules of XerC and two molecules of XerD.

The protein resides in the cytoplasm. Site-specific tyrosine recombinase, which acts by catalyzing the cutting and rejoining of the recombining DNA molecules. The XerC-XerD complex is essential to convert dimers of the bacterial chromosome into monomers to permit their segregation at cell division. It also contributes to the segregational stability of plasmids. The chain is Tyrosine recombinase XerC from Staphylococcus epidermidis (strain ATCC 35984 / DSM 28319 / BCRC 17069 / CCUG 31568 / BM 3577 / RP62A).